The chain runs to 24 residues: EHPALYRRYSKEHTFCKTKNQXCN.

As to expression, expressed by the venom gland.

The protein resides in the secreted. The catalysed reaction is Random hydrolysis of (1-&gt;4)-linkages between N-acetyl-beta-D-glucosamine and D-glucuronate residues in hyaluronate.. In terms of biological role, possesses high activity against hyaluronan in vitro. The polypeptide is Hyaluronidase (Tityus stigmurus (Brazilian scorpion)).